A 280-amino-acid polypeptide reads, in one-letter code: Energy-coupling factor transporter ATP-binding protein EcfA (280 aa).

The ABC transporter domain occupies 5–240 (IDVKNLTYKY…DEMLKLTGLE (236 aa)). Position 40–47 (40–47 (GHNGSGKS)) interacts with ATP.

This sequence belongs to the ABC transporter superfamily. Energy-coupling factor EcfA family. In terms of assembly, forms a stable energy-coupling factor (ECF) transporter complex composed of 2 membrane-embedded substrate-binding proteins (S component), 2 ATP-binding proteins (A component) and 2 transmembrane proteins (T component).

It is found in the cell membrane. ATP-binding (A) component of a common energy-coupling factor (ECF) ABC-transporter complex. Unlike classic ABC transporters this ECF transporter provides the energy necessary to transport a number of different substrates. In Pediococcus pentosaceus (strain ATCC 25745 / CCUG 21536 / LMG 10740 / 183-1w), this protein is Energy-coupling factor transporter ATP-binding protein EcfA.